A 338-amino-acid polypeptide reads, in one-letter code: Lipoate-protein ligase A (338 aa).

The region spanning 29 to 216 (PATQRVLFLW…AFFAHYGERV (188 aa)) is the BPL/LPL catalytic domain. ATP is bound by residues R71, 76-79 (GAVF), and K134. K134 contacts (R)-lipoate.

The protein belongs to the LplA family. As to quaternary structure, monomer.

It is found in the cytoplasm. The catalysed reaction is L-lysyl-[lipoyl-carrier protein] + (R)-lipoate + ATP = N(6)-[(R)-lipoyl]-L-lysyl-[lipoyl-carrier protein] + AMP + diphosphate + H(+). It functions in the pathway protein modification; protein lipoylation via exogenous pathway; protein N(6)-(lipoyl)lysine from lipoate: step 1/2. The protein operates within protein modification; protein lipoylation via exogenous pathway; protein N(6)-(lipoyl)lysine from lipoate: step 2/2. Its function is as follows. Catalyzes both the ATP-dependent activation of exogenously supplied lipoate to lipoyl-AMP and the transfer of the activated lipoyl onto the lipoyl domains of lipoate-dependent enzymes. The sequence is that of Lipoate-protein ligase A from Escherichia coli O157:H7.